The sequence spans 332 residues: Ketol-acid reductoisomerase (NAD(+)) (332 aa).

In terms of domain architecture, KARI N-terminal Rossmann spans 1–186; that stretch reads MEILHDEDVD…HWTKAGILEC (186 aa). Residues 24–27, Glu-46, Asn-55, Ser-57, and 87–90 each bind NAD(+); these read YGAQ and DEVQ. Residue His-112 is part of the active site. Gly-138 serves as a coordination point for NAD(+). Residues 187-332 enclose the KARI C-terminal knotted domain; that stretch reads TFEQETYEDL…AEIRKLFAQK (146 aa). Mg(2+)-binding residues include Asp-195, Glu-199, Glu-231, and Glu-235. Substrate is bound at residue Ser-256.

Belongs to the ketol-acid reductoisomerase family. Homodimer. Requires Mg(2+) as cofactor.

The enzyme catalyses (2R)-2,3-dihydroxy-3-methylbutanoate + NAD(+) = (2S)-2-acetolactate + NADH + H(+). It participates in amino-acid biosynthesis; L-isoleucine biosynthesis; L-isoleucine from 2-oxobutanoate: step 2/4. The protein operates within amino-acid biosynthesis; L-valine biosynthesis; L-valine from pyruvate: step 2/4. Involved in the biosynthesis of branched-chain amino acids (BCAA). Catalyzes an alkyl-migration followed by a ketol-acid reduction of (S)-2-acetolactate (S2AL) to yield (R)-2,3-dihydroxy-isovalerate. In the isomerase reaction, S2AL is rearranged via a Mg-dependent methyl migration to produce 3-hydroxy-3-methyl-2-ketobutyrate (HMKB). In the reductase reaction, this 2-ketoacid undergoes a metal-dependent reduction by NADH to yield (R)-2,3-dihydroxy-isovalerate. In Uncultured archaeon GZfos26G2, this protein is Ketol-acid reductoisomerase (NAD(+)).